A 345-amino-acid polypeptide reads, in one-letter code: Small ribosomal subunit biogenesis GTPase RsgA (345 aa).

The interval 1-36 (MSKNKLSKGQERRVQANHQRRLQQRERGAAHWDDQP) is disordered. Residues 23 to 34 (QQRERGAAHWDD) are compositionally biased toward basic and acidic residues. The CP-type G domain occupies 103 to 273 (RSVLTRPDVY…LIDSPGVREL (171 aa)). Residues 159 to 162 (NKID) and 213 to 221 (GQSGVGKSS) contribute to the GTP site. Zn(2+) is bound by residues Cys-297, Cys-302, His-304, and Cys-310.

The protein belongs to the TRAFAC class YlqF/YawG GTPase family. RsgA subfamily. In terms of assembly, monomer. Associates with 30S ribosomal subunit, binds 16S rRNA. The cofactor is Zn(2+).

It is found in the cytoplasm. Its function is as follows. One of several proteins that assist in the late maturation steps of the functional core of the 30S ribosomal subunit. Helps release RbfA from mature subunits. May play a role in the assembly of ribosomal proteins into the subunit. Circularly permuted GTPase that catalyzes slow GTP hydrolysis, GTPase activity is stimulated by the 30S ribosomal subunit. This chain is Small ribosomal subunit biogenesis GTPase RsgA, found in Sodalis glossinidius (strain morsitans).